A 154-amino-acid chain; its full sequence is Superoxide dismutase [Cu-Zn] (154 aa).

The Cu cation site is built by H47, H49, and H64. Cysteines 58 and 147 form a disulfide. The Zn(2+) site is built by H64, H72, H81, and D84. Position 121 (H121) interacts with Cu cation. The segment covering 125-137 (DDLGRGGNEESKK) has biased composition (basic and acidic residues). The tract at residues 125–147 (DDLGRGGNEESKKTGNAGPRPAC) is disordered. Position 144 (R144) interacts with substrate.

Homodimer. The cofactor is Cu cation. Zn(2+) serves as cofactor.

The protein resides in the cytoplasm. It carries out the reaction 2 superoxide + 2 H(+) = H2O2 + O2. Its function is as follows. Destroys radicals which are normally produced within the cells and which are toxic to biological systems. In Aspergillus niger, this protein is Superoxide dismutase [Cu-Zn].